The primary structure comprises 999 residues: MAGKARVHELAKELGVESKTVLAKLKEMGEFVKSASSTVEAPVARRLRNAFVNNTGSPAPAAPPAATPPTPTPTPTPPRTPTPAPPPGGPRVTAKPMPPRRPGAPTPGPKPKGPVPGPPQSATPAAKPASAHDIEVAAAEARAAALKAEQEAAVKAAQAARQQQRDNVRREPPTEGGPRPGPRPGPGAMPPRPGSPAAGRSGGPTPGPGPRSGGRPPARGAGNNPFGIQGGQQRPPAAGAGGPRPSPASMPPRPSPASMPPRPSPASMPSQRPGRPGGPGSGRPGAGAGRPGGGGGGGGGYRGGGGGGGGGYRGGPGGGGGGGGGGGYRGGPGGGGGGFRGGPGGGRPGGGGRGRGGGAAGAFGRPGGRPTRGRKSKKQRRQEFDNLSAPTMSSGAPRGQGQTVRLSRGASLSDFADKINANPGSLVQEMFNLGEMVTATQSCSDDTLLLLGEHLGFVVQIVSPEDEDRELLAQFNIDLDAEVAEDRLVSRPPVVTVMGHVDHGKTKLLDAIRKANVVAGEAGGITQHIGAYQVHVPHDDQDRAITFIDTPGHEAFTAMRARGAQVTDIVILVVAADDGVMPQTIEALNHAKAADVPIVVAVNKIDKPDANPDKVRQQLTEYGLVAEEYGGDTMFVNVAAKPGTGIDSLLEAVLLTADASLELTAPTDGPAQGVAIEAHLDKGRGAVATVLVQKGTLRAGDSIVAGGAHGRVRAMLDENGNQVAEAGPSRPVLVLGLTAVPGAGDTFLAAEDDRTVRQIAEQRQARRRAAAFANSRGRATLETLMEQLKAGEKTSLNLVLKGDVSGSVEALEDALFNLDIPEEVQLRIIHRGVGSITESDVMLASASSEAVTIIGFNVRAANKVREMADREGVEIRYYTVIYQAIEEIEAALKGLLKPEYEEVELGTAEVREVFRSSKVGNISGCIVRSGLLRRNAKARLLRDGAVVADNLTIGSLKRFKDDATEVREGFECGLTLAGYNNVQVGDVIETFEMREKARV.

The segment at 50–407 (AFVNNTGSPA…RGQGQTVRLS (358 aa)) is disordered. 2 stretches are compositionally biased toward pro residues: residues 60–89 (PAAP…PPGG) and 96–121 (PMPP…PPQS). The span at 136-162 (VAAAEARAAALKAEQEAAVKAAQAARQ) shows a compositional bias: low complexity. Residues 163–173 (QQRDNVRREPP) show a composition bias toward basic and acidic residues. Residues 179 to 194 (RPGPRPGPGAMPPRPG) are compositionally biased toward pro residues. The span at 213–222 (GGRPPARGAG) shows a compositional bias: low complexity. Positions 244 to 266 (RPSPASMPPRPSPASMPPRPSPA) are enriched in pro residues. A compositionally biased stretch (gly residues) spans 275-367 (RPGGPGSGRP…GAAGAFGRPG (93 aa)). Residues 371–380 (TRGRKSKKQR) show a composition bias toward basic residues. The segment covering 388–405 (SAPTMSSGAPRGQGQTVR) has biased composition (polar residues). The region spanning 490-662 (SRPPVVTVMG…VLLTADASLE (173 aa)) is the tr-type G domain. A G1 region spans residues 499–506 (GHVDHGKT). Residue 499–506 (GHVDHGKT) coordinates GTP. The interval 524 to 528 (GITQH) is G2. Residues 549–552 (DTPG) are G3. GTP contacts are provided by residues 549–553 (DTPGH) and 603–606 (NKID). The segment at 603-606 (NKID) is G4. Residues 639–641 (AAK) form a G5 region.

The protein belongs to the TRAFAC class translation factor GTPase superfamily. Classic translation factor GTPase family. IF-2 subfamily.

It localises to the cytoplasm. Functionally, one of the essential components for the initiation of protein synthesis. Protects formylmethionyl-tRNA from spontaneous hydrolysis and promotes its binding to the 30S ribosomal subunits. Also involved in the hydrolysis of GTP during the formation of the 70S ribosomal complex. In Salinispora tropica (strain ATCC BAA-916 / DSM 44818 / JCM 13857 / NBRC 105044 / CNB-440), this protein is Translation initiation factor IF-2.